Reading from the N-terminus, the 277-residue chain is Carbonyl reductase [NADPH] 3 (277 aa).

Ser-2 carries the N-acetylserine modification. NADP(+)-binding positions include 10-34, 38-42, 63-64, and Asn-90; these read VTGANRGIGLAIARELCRQFSGDVV, RDVAR, and DI. Ser-30 is subject to Phosphoserine. Ser-140 serves as a coordination point for substrate. Tyr-194 functions as the Proton acceptor in the catalytic mechanism. NADP(+) contacts are provided by residues 194 to 198 and Asp-239; that span reads YGVSK.

It belongs to the short-chain dehydrogenases/reductases (SDR) family. Detected in ovary, pancreas, intestine, colon, kidney, brain, thymus, lung, heart, liver, spleen, leukocyte, prostate and testis.

Its subcellular location is the cytoplasm. The enzyme catalyses a secondary alcohol + NADP(+) = a ketone + NADPH + H(+). The catalysed reaction is a quinone + NADPH + H(+) = a quinol + NADP(+). In terms of biological role, catalyzes the NADPH-dependent reduction of carbonyl compounds to their corresponding alcohols. Has low NADPH-dependent oxidoreductase activity. Acts on several orthoquinones, acts as well on non-quinone compounds, such as isatin or on the anticancer drug oracin. Best substrates for CBR3 is 1,2- naphthoquinone, hence could play a role in protection against cytotoxicity of exogenous quinones. Exerts activity toward ortho-quinones but not paraquinones. No endogenous substrate for CBR3 except isatin has been identified. This Homo sapiens (Human) protein is Carbonyl reductase [NADPH] 3.